The chain runs to 510 residues: NAD(P)H-quinone oxidoreductase subunit 2 A, chloroplastic (510 aa).

Transmembrane regions (helical) follow at residues L24–L44, I57–F77, I99–I119, M124–C144, L149–Y169, Y183–G203, P227–A247, W295–I315, M323–D343, Y354–L374, A395–F415, L418–L438, and M484–I504.

The protein belongs to the complex I subunit 2 family. As to quaternary structure, NDH is composed of at least 16 different subunits, 5 of which are encoded in the nucleus.

Its subcellular location is the plastid. The protein resides in the chloroplast thylakoid membrane. It carries out the reaction a plastoquinone + NADH + (n+1) H(+)(in) = a plastoquinol + NAD(+) + n H(+)(out). The enzyme catalyses a plastoquinone + NADPH + (n+1) H(+)(in) = a plastoquinol + NADP(+) + n H(+)(out). Functionally, NDH shuttles electrons from NAD(P)H:plastoquinone, via FMN and iron-sulfur (Fe-S) centers, to quinones in the photosynthetic chain and possibly in a chloroplast respiratory chain. The immediate electron acceptor for the enzyme in this species is believed to be plastoquinone. Couples the redox reaction to proton translocation, and thus conserves the redox energy in a proton gradient. The protein is NAD(P)H-quinone oxidoreductase subunit 2 A, chloroplastic of Solanum tuberosum (Potato).